A 295-amino-acid polypeptide reads, in one-letter code: MLTALNRYWDYLRIERQMSPHTITNYQHQLDATIKILAQQDIHSWTQVTPSVVRFILAESKKQGLKEKSLALRLSALRRFLSFLVQQGELKVNPATGISAPKQGWHLPKNMDGEQIQQLLANDSKEPIDIRDRAILELMYSSGLRLSELQGLDLNSINTRVREVRVIGKGNKERVVPFGRYASHAIQEWLKVRALFNPKDEALFVSQLGNRISHRAIQKRLETWGIRQGLNSHLNPHKLRHSFATHMLEASSDLRAVQELLGHSNLSTTQIYTHLNFQHLAEVYDQAHPRAKRKK.

One can recognise a Core-binding (CB) domain in the interval 1–85; the sequence is MLTALNRYWD…ALRRFLSFLV (85 aa). Residues 106–285 enclose the Tyr recombinase domain; the sequence is HLPKNMDGEQ…NFQHLAEVYD (180 aa). Catalysis depends on residues Arg-145, Lys-169, His-237, Arg-240, and His-263. Residue Tyr-272 is the O-(3'-phospho-DNA)-tyrosine intermediate of the active site.

Belongs to the 'phage' integrase family. XerC subfamily. In terms of assembly, forms a cyclic heterotetrameric complex composed of two molecules of XerC and two molecules of XerD.

It is found in the cytoplasm. Site-specific tyrosine recombinase, which acts by catalyzing the cutting and rejoining of the recombining DNA molecules. The XerC-XerD complex is essential to convert dimers of the bacterial chromosome into monomers to permit their segregation at cell division. It also contributes to the segregational stability of plasmids. This is Tyrosine recombinase XerC from Haemophilus influenzae (strain 86-028NP).